A 171-amino-acid polypeptide reads, in one-letter code: MDYFTLFGLPARYQIDTQALSLRFQDLQRQYHPDKFANGTQAQQLAAVQQSATINQAWQTLRHPLTRAEYLLSLHGFDLASEQHTVRDTAFLMEQLTLREELDDIDQSKDDVRLESFIKRVQKMFDARLQQMVEQLDNAAWDAAADTVRKLRFLDKLRSSAEQLEEKLLDF.

Positions 2-74 constitute a J domain; sequence DYFTLFGLPA…LTRAEYLLSL (73 aa).

This sequence belongs to the HscB family. In terms of assembly, interacts with HscA and stimulates its ATPase activity. Interacts with IscU.

In terms of biological role, co-chaperone involved in the maturation of iron-sulfur cluster-containing proteins. Seems to help targeting proteins to be folded toward HscA. The protein is Co-chaperone protein HscB of Salmonella agona (strain SL483).